Here is a 462-residue protein sequence, read N- to C-terminus: A-type ATP synthase subunit B (462 aa).

The protein belongs to the ATPase alpha/beta chains family. Has multiple subunits with at least A(3), B(3), C, D, E, F, H, I and proteolipid K(x).

It is found in the cell membrane. In terms of biological role, component of the A-type ATP synthase that produces ATP from ADP in the presence of a proton gradient across the membrane. The B chain is a regulatory subunit. This Pyrococcus furiosus (strain ATCC 43587 / DSM 3638 / JCM 8422 / Vc1) protein is A-type ATP synthase subunit B.